Consider the following 451-residue polypeptide: UPF0210 protein APL_1491 (451 aa).

It belongs to the UPF0210 family. Homodimer.

The protein is UPF0210 protein APL_1491 of Actinobacillus pleuropneumoniae serotype 5b (strain L20).